Consider the following 130-residue polypeptide: Small ribosomal subunit protein uS9 (130 aa).

It belongs to the universal ribosomal protein uS9 family.

This is Small ribosomal subunit protein uS9 from Streptococcus thermophilus (strain CNRZ 1066).